Reading from the N-terminus, the 413-residue chain is Ureide permease 5 (413 aa).

At 1–18 the chain is on the extracellular side; sequence MMIAQELGIYVVESKGGA. The helical transmembrane segment at 19 to 39 threads the bilayer; the sequence is ILCLLLSLLCLGTWPALMALL. Topologically, residues 40-50 are cytoplasmic; sequence ERRGRLPQHTY. The helical transmembrane segment at 51-71 threads the bilayer; it reads LDYSITNFLAAIFIAFVFGGI. Over 72–91 the chain is Extracellular; it reads GESTHEAPSFITQLTQIQDN. A helical transmembrane segment spans residues 92-112; sequence WPSVLFAMAGGVGLSIGNLAT. Residues 113-115 lie on the Cytoplasmic side of the membrane; the sequence is QYS. The helical transmembrane segment at 116–136 threads the bilayer; sequence LAFVGLSVTEVTAASITVVVG. Topologically, residues 137–149 are extracellular; it reads TTVNYFLDNGLNR. Residues 150-170 traverse the membrane as a helical segment; the sequence is ADILFSGVGCFMVAVCLGSAV. At 171–240 the chain is on the cytoplasmic side; that stretch reads HSSNSADIKA…RAIKVLGKSM (70 aa). 232–239 lines the ATP pocket; that stretch reads AIKVLGKS. Residues 241–261 traverse the membrane as a helical segment; that stretch reads VVGLGITFFAGLSFSLFSPLF. Over 262–278 the chain is Extracellular; sequence NLATNDQWHTLKQGVPK. Residues 279 to 299 form a helical membrane-spanning segment; that stretch reads LIVYTAFFYFSLSCFVIAVAL. Topologically, residues 300 to 326 are cytoplasmic; it reads NISFLYKPVLDSPRSSFREYLSDWNGR. The chain crosses the membrane as a helical span at residues 327–347; the sequence is GWALAAGLLCGFGNGLQFMGG. The Extracellular portion of the chain corresponds to 348 to 352; it reads QAAGY. A helical membrane pass occupies residues 353-373; it reads AASDAVQALPLVSTFWGIYLF. The Cytoplasmic portion of the chain corresponds to 374–384; the sequence is GEYRRSSTRTY. Residues 385-405 traverse the membrane as a helical segment; that stretch reads ALLVGMLVMFTVAVGLLMASA. Residues 406 to 413 lie on the Extracellular side of the membrane; that stretch reads GERETRFT.

It belongs to the plant ureide permease (TC 2.A.7.19) family. As to expression, expressed in lateral roots, rosette leaves, stems, stipules, flower stigma, pedicels and the connective tissue between pollen sacks.

The protein resides in the membrane. Proton-coupled transporter that transports a wide spectrum of oxo derivatives of heterocyclic nitrogen compounds, including allantoin, uric acid and xanthine, but not adenine. Mediates transport of uracil and 5-fluorouracil (a toxic uracil analog). Its function is as follows. Proton-coupled transporter that transports a wide spectrum of oxo derivatives of heterocyclic nitrogen compounds, including allantoin, xanthine and uracil. This Arabidopsis thaliana (Mouse-ear cress) protein is Ureide permease 5.